The following is a 314-amino-acid chain: Olfactory receptor 52K1 (314 aa).

Over 1–27 the chain is Extracellular; sequence MLPSNITSTHPAVFLLVGIPGLEHLHA. N-linked (GlcNAc...) asparagine glycosylation is present at Asn-5. Residues 28–48 form a helical membrane-spanning segment; that stretch reads WISIPFCFAYTLALLGNCTLL. Residues 49 to 56 lie on the Cytoplasmic side of the membrane; that stretch reads FIIQADAA. A helical transmembrane segment spans residues 57 to 77; the sequence is LHEPMYLFLAMLATIDLVLSS. At 78–101 the chain is on the extracellular side; it reads TTLPKMLAIFWFRDQEINFFACLV. Cysteines 99 and 191 form a disulfide. Residues 102 to 122 traverse the membrane as a helical segment; the sequence is QMFFLHSFSIMESAVLLAMAF. Residues 123 to 141 are Cytoplasmic-facing; that stretch reads DRYVAICKPLHYTTVLTGS. Residues 142 to 162 form a helical membrane-spanning segment; it reads LITKIGMAAVARAVTLMTPLP. The Extracellular portion of the chain corresponds to 163 to 198; sequence FLLRRFHYCRGPVIAHCYCEHMAVVRLACGDTSFNN. Residues 199 to 219 traverse the membrane as a helical segment; that stretch reads IYGIAVAMFIVVLDLLFVILS. Residues 220-239 lie on the Cytoplasmic side of the membrane; that stretch reads YVFILQAVLQLASQEARYKA. The helical transmembrane segment at 240–260 threads the bilayer; that stretch reads FGTCVSHIGAILSTYTPVVIS. Residues 261–275 are Extracellular-facing; sequence SVMHRVARHAAPRVH. The helical transmembrane segment at 276–296 threads the bilayer; it reads ILLAIFYLLFPPMVNPIIYGV. Residues 297-314 are Cytoplasmic-facing; that stretch reads KTKQIREYVLSLFQRKNM.

Belongs to the G-protein coupled receptor 1 family.

The protein localises to the cell membrane. Its function is as follows. Odorant receptor. The polypeptide is Olfactory receptor 52K1 (OR52K1) (Homo sapiens (Human)).